Here is a 399-residue protein sequence, read N- to C-terminus: Zinc finger TRAF-type-containing protein 1 (399 aa).

Gly residues predominate over residues 1 to 13; it reads MSGAEEAGGGGPA. The disordered stretch occupies residues 1 to 21; the sequence is MSGAEEAGGGGPAAGPAGAVP. The segment at 106–151 adopts an RING-type; degenerate zinc-finger fold; that stretch reads CTVCLDLPKASVYQCTNGHLMCAGCFIHLLADARLKEEQATCPNCR. The TRAF-type zinc finger occupies 152 to 210; that stretch reads CEISKSLCCRNLAVEKAVSELPSECGFCLRQFPRSLLERHQKEECQDRVTQCKYKRIGC.

It belongs to the ZFTRAF1 family. Interacts with LGALS3. In terms of tissue distribution, expressed in heart, brain, liver, testis and kidney.

Its subcellular location is the cytoplasm. It is found in the perinuclear region. The polypeptide is Zinc finger TRAF-type-containing protein 1 (Mus musculus (Mouse)).